The sequence spans 116 residues: G antigen 2D (116 aa).

A disordered region spans residues 1–116 (MSWRGRSTYR…PEEGEKQSQC (116 aa)). 2 stretches are compositionally biased toward acidic residues: residues 31-44 (FSDE…EEGE) and 86-95 (ECEDGPDGQE). Over residues 102-116 (EEVKTPEEGEKQSQC) the composition is skewed to basic and acidic residues.

This sequence belongs to the GAGE family. In terms of tissue distribution, not expressed in normal tissues, except in testis, but expressed by a large proportion of tumors of various histological origins.

The sequence is that of G antigen 2D (GAGE2D) from Homo sapiens (Human).